Reading from the N-terminus, the 287-residue chain is Phosphatidylglycerol--prolipoprotein diacylglyceryl transferase (287 aa).

The next 4 membrane-spanning stretches (helical) occupy residues V26 to A46, F71 to Y91, I106 to V126, and G132 to F152. R154 provides a ligand contact to a 1,2-diacyl-sn-glycero-3-phospho-(1'-sn-glycerol). Transmembrane regions (helical) follow at residues S187–A207, G217–F237, and W251–W271.

Belongs to the Lgt family.

The protein resides in the cell inner membrane. It carries out the reaction L-cysteinyl-[prolipoprotein] + a 1,2-diacyl-sn-glycero-3-phospho-(1'-sn-glycerol) = an S-1,2-diacyl-sn-glyceryl-L-cysteinyl-[prolipoprotein] + sn-glycerol 1-phosphate + H(+). The protein operates within protein modification; lipoprotein biosynthesis (diacylglyceryl transfer). Functionally, catalyzes the transfer of the diacylglyceryl group from phosphatidylglycerol to the sulfhydryl group of the N-terminal cysteine of a prolipoprotein, the first step in the formation of mature lipoproteins. The chain is Phosphatidylglycerol--prolipoprotein diacylglyceryl transferase from Allorhizobium ampelinum (strain ATCC BAA-846 / DSM 112012 / S4) (Agrobacterium vitis (strain S4)).